The following is a 307-amino-acid chain: Stage III sporulation protein AA (307 aa).

Residue 143–150 (GPPQTGKT) coordinates ATP.

The chain is Stage III sporulation protein AA (spoIIIAA) from Bacillus subtilis (strain 168).